The chain runs to 214 residues: Ribonuclease T (214 aa).

One can recognise an Exonuclease domain in the interval 20–195; that stretch reads VVVDVETAGF…YDTQQTAELF (176 aa). Residues Asp-23, Glu-25, His-182, and Asp-187 each coordinate Mg(2+). The Proton donor/acceptor role is filled by His-182.

The protein belongs to the RNase T family. Homodimer. Mg(2+) is required as a cofactor.

In terms of biological role, trims short 3' overhangs of a variety of RNA species, leaving a one or two nucleotide 3' overhang. Responsible for the end-turnover of tRNA: specifically removes the terminal AMP residue from uncharged tRNA (tRNA-C-C-A). Also appears to be involved in tRNA biosynthesis. The chain is Ribonuclease T from Vibrio campbellii (strain ATCC BAA-1116).